The sequence spans 86 residues: UPF0335 protein mll3968 (86 aa).

This sequence belongs to the UPF0335 family.

The sequence is that of UPF0335 protein mll3968 from Mesorhizobium japonicum (strain LMG 29417 / CECT 9101 / MAFF 303099) (Mesorhizobium loti (strain MAFF 303099)).